The following is a 126-amino-acid chain: MELGAGGVVFNAKREVLLLRDRMGFWVFPKGHPEPGESLEEAAVREVWEETGVRAEVLLPLYPTRYVNPKGVEREVHWFLMRGEGAPRLEEGMTGAGWFSPEEARALLAFPEDLGLLEVALERLPL.

One can recognise a Nudix hydrolase domain in the interval 1-121; that stretch reads MELGAGGVVF…EDLGLLEVAL (121 aa). Residues 21–23 and 30–32 each bind substrate; these read DRM and KGH. A Nudix box motif is present at residues 31-52; the sequence is GHPEPGESLEEAAVREVWEETG. Positions 46 and 50 each coordinate Mg(2+). Residues 66-68, arginine 74, and glutamate 112 contribute to the substrate site; that span reads YVN.

The protein belongs to the Nudix hydrolase family. Monomer. The cofactor is Mg(2+).

It catalyses the reaction P(1),P(6)-bis(5'-adenosyl) hexaphosphate + H2O = 2 ATP + 2 H(+). The catalysed reaction is P(1),P(5)-bis(5'-adenosyl) pentaphosphate + H2O = ADP + ATP + 2 H(+). It carries out the reaction P(1),P(4)-bis(5'-adenosyl) tetraphosphate + H2O = AMP + ATP + 2 H(+). With respect to regulation, strongly inhibited by fluoride ions. In terms of biological role, specifically hydrolyzes (di)adenosine polyphosphates but not ATP or diadenosine triphosphate, generating ATP as the product. Diadenosine hexaphosphate (Ap6A) is the preferred substrate and hydrolysis yields 2 ATP. It is the only enzyme that symmetrically hydrolyzes Ap6A. It also hydrolyzes diadenosine pentaphosphate (Ap5A), diadenosine tetraphosphate (Ap4A) and adenosine tetraphosphate (p4A). The chain is Diadenosine hexaphosphate hydrolase from Thermus thermophilus.